The sequence spans 355 residues: MPLVAHTDLPTFQRLREEGQDVLSVERAARQDIREMHIGLLNMMPDAALEATERQFFRLVGGANPIVQFHMHPFTIEGLPRGDQAAEHIARYYESFDRIREEGLDGLIVSGANVTQPHLQQEAFWQPLTEVFDWARSNVTSILCSCLATHALFQYSYGVERTHLGFKRWGVYSHRVVEPLHPLVADINTRFDVPHSRYNEIFREDMEAAGLRVLVESEEAGVHLAVSPDLFRVIYFQAHPEYDTVSLLKEYKREILRYFSGEREDYPPFPEHYFSLEVGAALNDYGQALRSARRAGRAPPPFPEEFVLRHLDNTWRDTAKAVFNNWLGKIYQITDQDRRKPFMAHIDPDNPLGLA.

The Acyl-thioester intermediate role is filled by C146. The substrate site is built by K167 and S196. H239 acts as the Proton acceptor in catalysis. Residue E241 is part of the active site. R253 contributes to the substrate binding site.

This sequence belongs to the MetA family.

It is found in the cytoplasm. The enzyme catalyses L-homoserine + succinyl-CoA = O-succinyl-L-homoserine + CoA. The protein operates within amino-acid biosynthesis; L-methionine biosynthesis via de novo pathway; O-succinyl-L-homoserine from L-homoserine: step 1/1. Functionally, transfers a succinyl group from succinyl-CoA to L-homoserine, forming succinyl-L-homoserine. In Methylococcus capsulatus (strain ATCC 33009 / NCIMB 11132 / Bath), this protein is Homoserine O-succinyltransferase.